The primary structure comprises 480 residues: Adenosylhomocysteinase (480 aa).

Residues Thr63, Asp142, and Glu203 each contribute to the substrate site. 204–206 serves as a coordination point for NAD(+); sequence TTT. Substrate-binding residues include Lys233 and Asp237. Residues Asn238, 267 to 272, Glu290, Asn325, 346 to 348, and Asn394 contribute to the NAD(+) site; these read GYGDVG and IGH.

This sequence belongs to the adenosylhomocysteinase family. It depends on NAD(+) as a cofactor.

Its subcellular location is the cytoplasm. The enzyme catalyses S-adenosyl-L-homocysteine + H2O = L-homocysteine + adenosine. Its pathway is amino-acid biosynthesis; L-homocysteine biosynthesis; L-homocysteine from S-adenosyl-L-homocysteine: step 1/1. Functionally, may play a key role in the regulation of the intracellular concentration of adenosylhomocysteine. The protein is Adenosylhomocysteinase of Xylella fastidiosa (strain 9a5c).